Consider the following 127-residue polypeptide: Small ribosomal subunit protein bS6 (127 aa).

It belongs to the bacterial ribosomal protein bS6 family.

In terms of biological role, binds together with bS18 to 16S ribosomal RNA. The polypeptide is Small ribosomal subunit protein bS6 (Acinetobacter baumannii (strain AB0057)).